We begin with the raw amino-acid sequence, 75 residues long: Metallothionein-like protein 1B (75 aa).

This sequence belongs to the metallothionein superfamily. Type 15 family.

Its function is as follows. Metallothioneins have a high content of cysteine residues that bind various heavy metals. The protein is Metallothionein-like protein 1B (MT1B) of Vicia faba (Broad bean).